Consider the following 291-residue polypeptide: BTB/POZ domain-containing protein 19 (291 aa).

Residues 29–98 (SDVCFVVGQE…LYTNSVKLYR (70 aa)) enclose the BTB domain. Positions 134-234 (CEALQVAVTF…LALLAPAELS (101 aa)) constitute a BACK domain.

The chain is BTB/POZ domain-containing protein 19 (BTBD19) from Homo sapiens (Human).